The primary structure comprises 310 residues: Porphobilinogen deaminase (310 aa).

The residue at position 242 (C242) is an S-(dipyrrolylmethanemethyl)cysteine.

This sequence belongs to the HMBS family. Monomer. Dipyrromethane is required as a cofactor.

It catalyses the reaction 4 porphobilinogen + H2O = hydroxymethylbilane + 4 NH4(+). It functions in the pathway porphyrin-containing compound metabolism; protoporphyrin-IX biosynthesis; coproporphyrinogen-III from 5-aminolevulinate: step 2/4. Functionally, tetrapolymerization of the monopyrrole PBG into the hydroxymethylbilane pre-uroporphyrinogen in several discrete steps. This Halorhodospira halophila (strain DSM 244 / SL1) (Ectothiorhodospira halophila (strain DSM 244 / SL1)) protein is Porphobilinogen deaminase.